A 467-amino-acid polypeptide reads, in one-letter code: Ergochrome gene cluster transcriptional coactivator CPUR_05432 (467 aa).

Positions 109 to 179 constitute an HTH iclR-type domain; the sequence is IAIQCEMLGS…RRGYVAHTPL (71 aa). The H-T-H motif DNA-binding region spans 139–158; sequence IQDVANLSNVPEQQLAQMIG.

It is found in the nucleus. In terms of biological role, transcriptional coactivator; part of the gene cluster responsible for the typical purple-black color of the ergot sclerotia. The ergochrome gene cluster produces several ergot pigments including the yellow ergochrome secalonic acid and its derivatives, as well as the red anthraquinones endocrocin and clavorubin. With CPUR_05433, coregulates the production of geodin. This chain is Ergochrome gene cluster transcriptional coactivator CPUR_05432, found in Claviceps purpurea (strain 20.1) (Ergot fungus).